Consider the following 224-residue polypeptide: tRNA (guanine-N(7)-)-methyltransferase (224 aa).

Glu52, Asp77, and Asp126 together coordinate S-adenosyl-L-methionine. The active site involves Asp126. Residues Lys130 and Asp162 each coordinate substrate.

It belongs to the class I-like SAM-binding methyltransferase superfamily. TrmB family.

The catalysed reaction is guanosine(46) in tRNA + S-adenosyl-L-methionine = N(7)-methylguanosine(46) in tRNA + S-adenosyl-L-homocysteine. Its pathway is tRNA modification; N(7)-methylguanine-tRNA biosynthesis. Catalyzes the formation of N(7)-methylguanine at position 46 (m7G46) in tRNA. The sequence is that of tRNA (guanine-N(7)-)-methyltransferase from Christiangramia forsetii (strain DSM 17595 / CGMCC 1.15422 / KT0803) (Gramella forsetii).